The primary structure comprises 60 residues: Metallothionein B (60 aa).

The interval 1 to 28 (MDPCDCSKSGTCNCGGSCTCTNCSCTTC) is beta. Positions 4, 6, 12, 14, 18, 20, 23, 25, 28, 32, 33, 35, 36, 40, 43, 47, 49, 54, 58, and 59 each coordinate a divalent metal cation. An alpha region spans residues 29-60 (KKSCCPCCPSGCTKCASGCVCKGKTCDTSCCQ).

It belongs to the metallothionein superfamily. Type 1 family.

Metallothioneins have a high content of cysteine residues that bind various heavy metals. The protein is Metallothionein B (mtb) of Dicentrarchus labrax (European seabass).